The primary structure comprises 367 residues: Probable butyrate kinase (367 aa).

It belongs to the acetokinase family.

It is found in the cytoplasm. The catalysed reaction is butanoate + ATP = butanoyl phosphate + ADP. This is Probable butyrate kinase from Bacillus anthracis (strain A0248).